The primary structure comprises 291 residues: m-AAA protease-interacting protein 1, mitochondrial (291 aa).

The N-terminal 96 residues, 1-96 (MALAARLLPQ…SFPACPQRSY (96 aa)), are a transit peptide targeting the mitochondrion.

In terms of assembly, interacts with AFG3L2. Interacts with SPG7. Interacts with SMDT1/EMRE (via the N-terminal transit peptide); interaction is direct and takes place before maturation of SMDT1/EMRE.

The protein localises to the mitochondrion matrix. In terms of biological role, promotes sorting of SMDT1/EMRE in mitochondria by ensuring its maturation. Interacts with the transit peptide region of SMDT1/EMRE precursor protein in the mitochondrial matrix, leading to protect it against protein degradation by YME1L1, thereby ensuring SMDT1/EMRE maturation by the mitochondrial processing peptidase (PMPCA and PMPCB). The sequence is that of m-AAA protease-interacting protein 1, mitochondrial from Homo sapiens (Human).